Here is a 588-residue protein sequence, read N- to C-terminus: Aspartate--tRNA ligase (588 aa).

E177 provides a ligand contact to L-aspartate. The tract at residues 201 to 204 (QLFK) is aspartate. Residue R223 participates in L-aspartate binding. Residues 223–225 (RDE) and Q232 each bind ATP. H451 lines the L-aspartate pocket. E485 serves as a coordination point for ATP. An L-aspartate-binding site is contributed by R492. 537–540 (GLDR) lines the ATP pocket.

It belongs to the class-II aminoacyl-tRNA synthetase family. Type 1 subfamily. In terms of assembly, homodimer.

The protein localises to the cytoplasm. The catalysed reaction is tRNA(Asp) + L-aspartate + ATP = L-aspartyl-tRNA(Asp) + AMP + diphosphate. Functionally, catalyzes the attachment of L-aspartate to tRNA(Asp) in a two-step reaction: L-aspartate is first activated by ATP to form Asp-AMP and then transferred to the acceptor end of tRNA(Asp). The chain is Aspartate--tRNA ligase from Staphylococcus carnosus (strain TM300).